Reading from the N-terminus, the 406-residue chain is Succinylornithine transaminase/acetylornithine aminotransferase (406 aa).

Pyridoxal 5'-phosphate-binding positions include 108 to 109 (GA) and F141. Residue R144 coordinates N(2)-acetyl-L-ornithine. 226 to 229 (DEVQ) is a binding site for pyridoxal 5'-phosphate. K255 carries the post-translational modification N6-(pyridoxal phosphate)lysine. T283 is a binding site for N(2)-acetyl-L-ornithine. T284 provides a ligand contact to pyridoxal 5'-phosphate.

This sequence belongs to the class-III pyridoxal-phosphate-dependent aminotransferase family. ArgD subfamily. In terms of assembly, homodimer. Pyridoxal 5'-phosphate is required as a cofactor.

The protein resides in the cytoplasm. It carries out the reaction N(2)-succinyl-L-ornithine + 2-oxoglutarate = N-succinyl-L-glutamate 5-semialdehyde + L-glutamate. It catalyses the reaction N(2)-acetyl-L-ornithine + 2-oxoglutarate = N-acetyl-L-glutamate 5-semialdehyde + L-glutamate. The protein operates within amino-acid biosynthesis; L-arginine biosynthesis; N(2)-acetyl-L-ornithine from L-glutamate: step 4/4. It participates in amino-acid degradation; L-arginine degradation via AST pathway; L-glutamate and succinate from L-arginine: step 3/5. Transaminates both N(2)-acetylornithine and N(2)-succinylornithine. This Pseudomonas aeruginosa (strain ATCC 15692 / DSM 22644 / CIP 104116 / JCM 14847 / LMG 12228 / 1C / PRS 101 / PAO1) protein is Succinylornithine transaminase/acetylornithine aminotransferase (aruC).